A 577-amino-acid polypeptide reads, in one-letter code: Arginine--tRNA ligase (577 aa).

The 'HIGH' region signature appears at 122 to 132 (PNVAKEMHVGH).

Belongs to the class-I aminoacyl-tRNA synthetase family. As to quaternary structure, monomer.

Its subcellular location is the cytoplasm. It catalyses the reaction tRNA(Arg) + L-arginine + ATP = L-arginyl-tRNA(Arg) + AMP + diphosphate. This is Arginine--tRNA ligase from Salmonella gallinarum (strain 287/91 / NCTC 13346).